Consider the following 190-residue polypeptide: MEKVPGEMEIERRERSEELSEAERKAVQAMWARLYANCEDVGVAILVRFFVNFPSAKQYFSQFKHMEDPLEMERSPQLRKHACRVMGALNTVVENLHDPDKVSSVLALVGKAHALKHKVEPVYFKILSGVILEVVAEEFASDFPPETQRAWAKLRGLIYSHVTAAYKEVGWVQQVPNATTPPATLPSSGP.

The 150-residue stretch at 18–167 (ELSEAERKAV…IYSHVTAAYK (150 aa)) folds into the Globin domain. A disulfide bridge links cysteine 38 with cysteine 83. Heme b contacts are provided by histidine 81 and histidine 113.

It belongs to the globin family. Monomeric. Homodimer; disulfide-linked in vitro. Also homooligomeric in vitro. The formation of an intramolecular disulfide bond between cysteines Cys-38 and Cys-83 specifically enhances the nitrite reductase activity. As to expression, widely expressed. Highest expression in heart, stomach, bladder and small intestine.

It localises to the cytoplasm. The protein resides in the nucleus. It carries out the reaction Fe(II)-heme b-[protein] + nitric oxide + O2 = Fe(III)-heme b-[protein] + nitrate. The catalysed reaction is Fe(III)-heme b-[protein] + nitric oxide + H2O = Fe(II)-heme b-[protein] + nitrite + 2 H(+). It catalyses the reaction 2 superoxide + 2 H(+) = H2O2 + O2. The enzyme catalyses H2O2 + AH2 = A + 2 H2O. Its activity is regulated as follows. The nitric oxide dioxygenase activity is activated by a reducing system composed of cytochrome b5, its upstream reductase CYB5R3 and NADH. Functionally, probable multifunctional globin with a hexacoordinated heme iron required for the catalysis of various reactions depending on redox condition of the cell as well as oxygen availability. Has a nitric oxide dioxygenase (NOD) activity and is most probably involved in cell-mediated and oxygen-dependent nitric oxide consumption. By scavenging this second messenger may regulate several biological processes including endothelium-mediated vasodilation and vascular tone. Under normoxic conditions functions as a nitric oxide dioxygenase (NOD) but under hypoxic conditions the globin may switch its function to that of a nitrite (NO2) reductase (NiR), generating nitric oxide. Could also have peroxidase and superoxide dismutase activities, detoxifying reactive oxygen species and protecting cells against oxidative stress. Also binds dioxygen with low affinity and could function as an oxygen sensor but has probably no function as a respiratory oxygen carrier. The chain is Cytoglobin from Homo sapiens (Human).